The chain runs to 145 residues: UPF0735 ACT domain-containing protein CPE1414 (145 aa).

In terms of domain architecture, ACT spans 69–144; the sequence is IFNMVVTHEK…GVEKVEFVAM (76 aa).

This sequence belongs to the UPF0735 family.

This chain is UPF0735 ACT domain-containing protein CPE1414, found in Clostridium perfringens (strain 13 / Type A).